The following is a 765-amino-acid chain: Protein transport protein Sec23A (765 aa).

An N-acetylthreonine modification is found at T2. 4 residues coordinate Zn(2+): C61, C66, C85, and C88. Position 308 is a phosphothreonine (T308). The Gelsolin-like repeat unit spans residues P632–L718.

It belongs to the SEC23/SEC24 family. SEC23 subfamily. As to quaternary structure, COPII is composed of at least five proteins: the Sec23/24 complex, the Sec13/31 complex and Sar1. Interacts with SEC23IP. Interacts with HTR4. Interacts with SEC16A. Interacts with SLC6A4. Interacts (as part of the Sec23/24 complex) with SEC22B; recruits SEC22B into COPII-coated vesicles and allows the transport of this cargo from the endoplasmic reticulum to the Golgi. Interacts (via Gelsolin-like repeat) with MIA2 and MIA3; specifically involved in the transport of large cargos like the collagen COL7A1. Interacts with DDHD1. Interacts with TMEM39A. Interacts with SACM1L; this interaction is reduced in the absence of TMEM39A. Interacts with kinase FAM20C; transport of FAM20C from the endoplasmic reticulum to the Golgi is likely to be mediated by COPII vesicles.

Its subcellular location is the cytoplasmic vesicle. It is found in the COPII-coated vesicle membrane. The protein localises to the endoplasmic reticulum membrane. It localises to the cytoplasm. The protein resides in the cytosol. Functionally, component of the coat protein complex II (COPII) which promotes the formation of transport vesicles from the endoplasmic reticulum (ER). The coat has two main functions, the physical deformation of the endoplasmic reticulum membrane into vesicles and the selection of cargo molecules for their transport to the Golgi complex. Required for the translocation of insulin-induced glucose transporter SLC2A4/GLUT4 to the cell membrane. This chain is Protein transport protein Sec23A, found in Pongo abelii (Sumatran orangutan).